The sequence spans 253 residues: Indole-3-glycerol phosphate synthase (253 aa).

This sequence belongs to the TrpC family.

It catalyses the reaction 1-(2-carboxyphenylamino)-1-deoxy-D-ribulose 5-phosphate + H(+) = (1S,2R)-1-C-(indol-3-yl)glycerol 3-phosphate + CO2 + H2O. It functions in the pathway amino-acid biosynthesis; L-tryptophan biosynthesis; L-tryptophan from chorismate: step 4/5. This is Indole-3-glycerol phosphate synthase from Exiguobacterium sp. (strain ATCC BAA-1283 / AT1b).